A 480-amino-acid chain; its full sequence is MVERKRWSEEFSEWFNEVIEEAGILDKRYPVKGMNVWLPYGLKIMRNIEKFIHEEMERTGHQEVLFPALIPETEFKKEAEHIAGFEGEVFWVTHAGHEPLDVRLVLRPTSETAMYSMFALWIRSHADLPFKVYQIVNVYRYETKHTRPLIRVREISRFFEAHTAHADFEDAERQIKEDLEIFDNLMRKLALAYIISKRPEWDKFPGAFYSLGAEVVMPDGRTLQIGTMHNYKQNFSKAYNILYEKEDGTHDYVHQTTFGMSERLLAAVIAIHGDDRGMVLPPTIAPIQVVIVPIPKKGSEEEVYSYAKGIEEELRDAGIRVYLDLRDKRPGWKFYDWELKGVPVRVEVGPIDVQNSTVVLARRDKLEKITVKREELVDKVRELFEDIMEFLYERANEWLESHIKRVDTLEEAKAVFEDRRGIVEIPWCGEESCGLKMEEELEAKMLGIPYPEEKAKAPEGSKCPVCGREAKFIARFARTY.

Belongs to the class-II aminoacyl-tRNA synthetase family. ProS type 3 subfamily. As to quaternary structure, homodimer.

Its subcellular location is the cytoplasm. The catalysed reaction is tRNA(Pro) + L-proline + ATP = L-prolyl-tRNA(Pro) + AMP + diphosphate. Its function is as follows. Catalyzes the attachment of proline to tRNA(Pro) in a two-step reaction: proline is first activated by ATP to form Pro-AMP and then transferred to the acceptor end of tRNA(Pro). This Pyrococcus horikoshii (strain ATCC 700860 / DSM 12428 / JCM 9974 / NBRC 100139 / OT-3) protein is Proline--tRNA ligase.